Consider the following 524-residue polypeptide: NAD(P)H-quinone oxidoreductase chain 4, chloroplastic (524 aa).

Transmembrane regions (helical) follow at residues 4–24 (YPWLTIITLFPISAGLLIPLI), 31–51 (LIRWYALGICLIDFLLMTYVF), 87–107 (IALVLLTGFITTLATLAAWPV), 113–133 (LFYFLMLAMYSGQLGLFLAQD), 134–154 (LLLFFFMWELELIPVYLLLSM), 167–187 (FILYTAGGSIFLLAAILTISL), 211–231 (ILVYLGFLIAYAVKLPVFPFH), 242–262 (HYSTCMLLAGILLKMGGYGFI), 275–295 (IFAPWLVALGAGQIVYAALVS), 308–328 (SSVSHMGFVLIGAGSFSDLGL), 330–350 (GAILQMISHGLIGAGLFFLAG), 386–406 (LALPGMSGFVAELMIFLGIVA), 417–437 (IITCVEGIGIILTPIYLLSMV), and 465–485 (VFIILSLLVPMLGIGFYPDLT).

This sequence belongs to the complex I subunit 4 family.

It localises to the plastid. The protein resides in the chloroplast thylakoid membrane. The enzyme catalyses a plastoquinone + NADH + (n+1) H(+)(in) = a plastoquinol + NAD(+) + n H(+)(out). The catalysed reaction is a plastoquinone + NADPH + (n+1) H(+)(in) = a plastoquinol + NADP(+) + n H(+)(out). This chain is NAD(P)H-quinone oxidoreductase chain 4, chloroplastic, found in Staurastrum punctulatum (Green alga).